We begin with the raw amino-acid sequence, 358 residues long: Na(+)/H(+) exchange regulatory cofactor NHE-RF1 (358 aa).

Ser-2 is modified (N-acetylserine). Phosphoserine is present on residues Ser-2 and Ser-46. One can recognise a PDZ 1 domain in the interval 14 to 94; the sequence is LCCLEKGPNG…AVRLLVVDPE (81 aa). Residues 114-134 are compositionally biased toward low complexity; sequence QETPGQAEPAAAAEAQGAGNE. Disordered regions lie at residues 114–192 and 269–358; these read QETP…EASG and SREA…FSNL. The segment covering 135 to 149 has biased composition (basic and acidic residues); that stretch reads NEPREADKSHPEQRK. Positions 154-234 constitute a PDZ 2 domain; that stretch reads LCTMKKGPSG…ETKLLVVDRE (81 aa). Ser-162, Ser-269, Ser-280, Ser-290, and Ser-291 each carry phosphoserine. Over residues 287-306 the composition is skewed to polar residues; that stretch reads RSASSDTSEELNSQDSPPKQ. A Phosphothreonine modification is found at Thr-293. Residues Ser-294, Ser-299, and Ser-302 each carry the phosphoserine modification. Residues 307-319 show a composition bias toward low complexity; it reads DSTAPSSTSSSDP. Over residues 348-358 the composition is skewed to basic and acidic residues; sequence WSKKNELFSNL.

As to quaternary structure, homodimer, and heterodimer with NHERF2. Binds the N-termini of EZR, RDX and MSN. Binds the C-termini of PDGFRA, PDGFRB, ADRB2, NOS2 and CFTR. Binds ARHGAP17, EPI64, RACK1, OPRK1, GNAQ, CTNNB1 and PLCB3. Binds PDZK1. Interacts with CLCN3. Binds the C-terminus of PAG1. In resting T-cells, part of a PAG1-NHERF1-MSN complex which is disrupted upon TCR activation. Forms a complex with CFTR and SLC4A7. Forms a complex with SLC4A7 and ATP6V1B1. Interacts with TRPC4 (via the PDZ-binding domain). Directly interacts with HTR4. Interacts (via the PDZ 1 domain) with PODXL (via the C-terminal PDZ-binding motif DTHL); interaction is not detected in glomerular epithelium cells. Interacts (via the PDZ 1 domain) with PODXL (via the C-terminal PDZ-binding motif DTHL); the interaction take place early in the secretory pathway and is necessary for its apical membrane sorting. Interacts with SLC26A3. Interacts with MCC. Interacts with SLC34A1. Interacts (via the PDZ domains) with SLC26A6 isoform 4 and isoform 5. Interacts (via PDZ domains) with ACE2 (via PDZ-binding motif); the interaction may enhance ACE2 membrane residence. Phosphorylated on serine residues.

It is found in the cytoplasm. The protein resides in the apical cell membrane. It localises to the endomembrane system. The protein localises to the cell projection. Its subcellular location is the filopodium. It is found in the ruffle. The protein resides in the microvillus. Scaffold protein that connects plasma membrane proteins with members of the ezrin/moesin/radixin family and thereby helps to link them to the actin cytoskeleton and to regulate their surface expression. Necessary for recycling of internalized ADRB2. Was first known to play a role in the regulation of the activity and subcellular location of SLC9A3. Necessary for cAMP-mediated phosphorylation and inhibition of SLC9A3. Involved in sperm capacitation. May participate in the regulation of the chloride and bicarbonate homeostasis in spermatozoa. May enhance Wnt signaling. May participate in HTR4 targeting to microvilli. Involved in the regulation of phosphate reabsorption in the renal proximal tubules. This chain is Na(+)/H(+) exchange regulatory cofactor NHE-RF1 (NHERF1), found in Macaca fascicularis (Crab-eating macaque).